The following is an 833-amino-acid chain: Leucine--tRNA ligase (833 aa).

A 'HIGH' region motif is present at residues 41 to 52; the sequence is PYPSGAGLHVGH. The short motif at 610-614 is the 'KMSKS' region element; the sequence is KMSKS. Residue Lys613 participates in ATP binding.

It belongs to the class-I aminoacyl-tRNA synthetase family.

Its subcellular location is the cytoplasm. It carries out the reaction tRNA(Leu) + L-leucine + ATP = L-leucyl-tRNA(Leu) + AMP + diphosphate. The sequence is that of Leucine--tRNA ligase from Streptococcus pyogenes serotype M1.